Here is a 575-residue protein sequence, read N- to C-terminus: E3 ubiquitin-protein ligase IpaH1.4 (575 aa).

Residues 1 to 270 (MIKSTNIQAI…PDYSGPQIFF (270 aa)) form an interaction with target proteins region. LRR repeat units lie at residues 69 to 90 (LQNQ…PDLP), 91 to 115 (PQIT…MLKV), 117 to 130 (HAQF…PALP), 131 to 150 (ETLE…PFLP), 151 to 170 (ENLT…PLLP), 171 to 195 (PELK…KLEG), 197 to 209 (ALAN…LPEL), and 210 to 233 (PFSM…VLRL). The tract at residues 271-281 (SMGNSATISAP) is linker. The E3 ubiquitin-protein ligase catalytic domain stretch occupies residues 282-575 (EHSLADAVTA…LSENGSNHIA (294 aa)). The NEL domain maps to 284–575 (SLADAVTAWF…LSENGSNHIA (292 aa)). The Glycyl thioester intermediate role is filled by cysteine 368.

This sequence belongs to the LRR-containing bacterial E3 ligase family. As to quaternary structure, interacts with human RBCK1/HOIL-1 and RNF31/HOIP components of the LUBAC complex. Post-translationally, ubiquitinated in the presence of host E1 ubiquitin-activating enzyme, E2 ubiquitin-conjugating enzyme and ubiquitin.

Its subcellular location is the secreted. It localises to the host cytoplasm. It carries out the reaction S-ubiquitinyl-[E2 ubiquitin-conjugating enzyme]-L-cysteine + [acceptor protein]-L-lysine = [E2 ubiquitin-conjugating enzyme]-L-cysteine + N(6)-ubiquitinyl-[acceptor protein]-L-lysine.. It participates in protein modification; protein ubiquitination. With respect to regulation, exists in an autoinhibited state in the absence of substrate protein, probably due to interactions of the leucine-rich repeat domain with the catalytic domain. Is activated upon binding to a substrate protein. In terms of biological role, E3 ubiquitin-protein ligase effector that inhibits host cell innate immunity during bacterial infection by catalyzing 'Lys-48'-linked polyubiquitination and subsequent degradation of host RNF31/HOIP and RBCK1/HOIL-1. Host RNF31/HOIP is the catalytic component of the LUBAC complex, which conjugates linear ('Met-1'-linked) polyubiquitin chains at the surface of bacteria invading the host cytosol to form the ubiquitin coat surrounding bacteria. The bacterial ubiquitin coat acts as an 'eat-me' signal for xenophagy and promotes NF-kappa-B activation. By promoting degradation of host RNF31/HOIP, IpaH1.4 prevents formation of the bacterial ubiquitin coat and activation of host cell innate immunity. The polypeptide is E3 ubiquitin-protein ligase IpaH1.4 (Shigella flexneri).